The chain runs to 495 residues: Altronate dehydratase (495 aa).

This sequence belongs to the UxaA family. The cofactor is Fe(2+). Mn(2+) serves as cofactor.

It catalyses the reaction D-altronate = 2-dehydro-3-deoxy-D-gluconate + H2O. It functions in the pathway carbohydrate metabolism; pentose and glucuronate interconversion. Its activity is regulated as follows. Is inhibited by high concentrations of Fe(2+) (&gt; 2 mM), and by EDTA or other iron chelators in vitro. Functionally, catalyzes the dehydration of D-altronate. This Escherichia coli (strain K12) protein is Altronate dehydratase (uxaA).